The following is a 232-amino-acid chain: Homeobox protein Rhox13 (232 aa).

The interval 45-114 is disordered; that stretch reads QAAVASSHDS…EAAAPSVAAV (70 aa). Acidic residues predominate over residues 68–105; that stretch reads SDSESESDSESESDSSDSSDESDDDSSTSDEDTSDPEE. The homeobox DNA-binding region spans 148–207; it reads RRGPPFHFAQWQVEEMESLFEETQYPDLLTRGELARTLNVPEVKVKVWFTNRRAKQRKIE.

It belongs to the paired-like homeobox family.

It is found in the nucleus. Probable transcription factor. The protein is Homeobox protein Rhox13 of Mus musculus (Mouse).